The sequence spans 405 residues: Pulcherriminic acid synthase (405 aa).

The heme site is built by lysine 62, asparagine 229, arginine 285, and cysteine 353.

This sequence belongs to the cytochrome P450 family. Homodimer. Requires heme as cofactor.

It carries out the reaction cyclo(L-leucyl-L-leucyl) + 6 reduced [2Fe-2S]-[ferredoxin] + 3 O2 + 4 H(+) = pulcherriminic acid + 6 oxidized [2Fe-2S]-[ferredoxin] + 4 H2O. Functionally, involved in the biosynthesis of pulcherrimin, a red extracellular pigment. Catalyzes the oxidation of cyclo(L-Leu-L-Leu) (cLL) to yield pulcherriminic acid which forms pulcherrimin via a nonenzymic reaction with Fe(3+). Substrates with small alkyl groups (cAA, cLG, cLP) exhibit weaker binding to CYP134A1, but substrates with larger hydrophobic side chains bind in a similar regime to cLL. In Bacillus subtilis (strain 168), this protein is Pulcherriminic acid synthase (cypX).